A 347-amino-acid chain; its full sequence is RNA 3'-terminal phosphate cyclase (347 aa).

Residues Q109 and 290–294 (YLADQ) contribute to the ATP site. H315 acts as the Tele-AMP-histidine intermediate in catalysis.

The protein belongs to the RNA 3'-terminal cyclase family. Type 1 subfamily.

The protein resides in the cytoplasm. It carries out the reaction a 3'-end 3'-phospho-ribonucleotide-RNA + ATP = a 3'-end 2',3'-cyclophospho-ribonucleotide-RNA + AMP + diphosphate. Catalyzes the conversion of 3'-phosphate to a 2',3'-cyclic phosphodiester at the end of RNA. The mechanism of action of the enzyme occurs in 3 steps: (A) adenylation of the enzyme by ATP; (B) transfer of adenylate to an RNA-N3'P to produce RNA-N3'PP5'A; (C) and attack of the adjacent 2'-hydroxyl on the 3'-phosphorus in the diester linkage to produce the cyclic end product. The biological role of this enzyme is unknown but it is likely to function in some aspects of cellular RNA processing. This chain is RNA 3'-terminal phosphate cyclase, found in Ralstonia nicotianae (strain ATCC BAA-1114 / GMI1000) (Ralstonia solanacearum).